The primary structure comprises 121 residues: Ribonuclease P protein component (121 aa).

This sequence belongs to the RnpA family. Consists of a catalytic RNA component (M1 or rnpB) and a protein subunit.

It catalyses the reaction Endonucleolytic cleavage of RNA, removing 5'-extranucleotides from tRNA precursor.. RNaseP catalyzes the removal of the 5'-leader sequence from pre-tRNA to produce the mature 5'-terminus. It can also cleave other RNA substrates such as 4.5S RNA. The protein component plays an auxiliary but essential role in vivo by binding to the 5'-leader sequence and broadening the substrate specificity of the ribozyme. The chain is Ribonuclease P protein component from Nitrosomonas eutropha (strain DSM 101675 / C91 / Nm57).